Reading from the N-terminus, the 168-residue chain is NADH-quinone oxidoreductase subunit I (168 aa).

4Fe-4S ferredoxin-type domains are found at residues 58–88 (LRRY…IEAG) and 99–128 (VRYD…EGPN). Residues C68, C71, C74, C78, C108, C111, C114, and C118 each contribute to the [4Fe-4S] cluster site.

It belongs to the complex I 23 kDa subunit family. As to quaternary structure, NDH-1 is composed of 14 different subunits. Subunits NuoA, H, J, K, L, M, N constitute the membrane sector of the complex. It depends on [4Fe-4S] cluster as a cofactor.

It localises to the cell inner membrane. It catalyses the reaction a quinone + NADH + 5 H(+)(in) = a quinol + NAD(+) + 4 H(+)(out). Functionally, NDH-1 shuttles electrons from NADH, via FMN and iron-sulfur (Fe-S) centers, to quinones in the respiratory chain. The immediate electron acceptor for the enzyme in this species is believed to be ubiquinone. Couples the redox reaction to proton translocation (for every two electrons transferred, four hydrogen ions are translocated across the cytoplasmic membrane), and thus conserves the redox energy in a proton gradient. This chain is NADH-quinone oxidoreductase subunit I, found in Bradyrhizobium diazoefficiens (strain JCM 10833 / BCRC 13528 / IAM 13628 / NBRC 14792 / USDA 110).